Consider the following 169-residue polypeptide: MLARSALRSGFLPSLTSSVKTGFCLKAAAPTLSMKWSAVKYYSTKHFTKEHEWVKVDGDVGTVGITSYAANALGEVVFVELPEPETTVSVGDGIGAVESVKSASDVYSPVSGTVTSINESLGDSPDKVSSSPEEEGWICKIKLSSPDELKSLLNDESYAQFCKEEDASH.

The 83-residue stretch at 60 to 142 (VGTVGITSYA…EEEGWICKIK (83 aa)) folds into the Lipoyl-binding domain. Lys101 carries the post-translational modification N6-lipoyllysine. The residue at position 131 (Ser131) is a Phosphoserine.

This sequence belongs to the GcvH family. In terms of assembly, component of the glycine decarboxylase complex (GDC), which is composed of four proteins: P, T, L and H. (R)-lipoate serves as cofactor.

The protein localises to the mitochondrion. Functionally, the glycine cleavage system (glycine decarboxylase complex) catalyzes the degradation of glycine. The H protein shuttles the methylamine group of glycine from the P protein to the T protein. In Schizosaccharomyces pombe (strain 972 / ATCC 24843) (Fission yeast), this protein is Putative glycine cleavage system H protein, mitochondrial (gcv3).